We begin with the raw amino-acid sequence, 126 residues long: Fluoride-specific ion channel FluC 1 (126 aa).

The next 3 membrane-spanning stretches (helical) occupy residues His-37–Leu-57, Ile-67–Val-87, and Leu-98–Ala-118. Residues Gly-77 and Ser-80 each coordinate Na(+).

Belongs to the fluoride channel Fluc/FEX (TC 1.A.43) family.

The protein localises to the cell inner membrane. It catalyses the reaction fluoride(in) = fluoride(out). Na(+) is not transported, but it plays an essential structural role and its presence is essential for fluoride channel function. In terms of biological role, fluoride-specific ion channel. Important for reducing fluoride concentration in the cell, thus reducing its toxicity. This is Fluoride-specific ion channel FluC 1 from Parasynechococcus marenigrum (strain WH8102).